A 136-amino-acid chain; its full sequence is Large ribosomal subunit protein eL27A (136 aa).

It belongs to the eukaryotic ribosomal protein eL27 family. As to quaternary structure, component of the large ribosomal subunit (LSU). Mature yeast ribosomes consist of a small (40S) and a large (60S) subunit. The 40S small subunit contains 1 molecule of ribosomal RNA (18S rRNA) and at least 33 different proteins. The large 60S subunit contains 3 rRNA molecules (25S, 5.8S and 5S rRNA) and at least 46 different proteins.

It localises to the cytoplasm. It is found in the nucleus. Functionally, component of the ribosome, a large ribonucleoprotein complex responsible for the synthesis of proteins in the cell. The small ribosomal subunit (SSU) binds messenger RNAs (mRNAs) and translates the encoded message by selecting cognate aminoacyl-transfer RNA (tRNA) molecules. The large subunit (LSU) contains the ribosomal catalytic site termed the peptidyl transferase center (PTC), which catalyzes the formation of peptide bonds, thereby polymerizing the amino acids delivered by tRNAs into a polypeptide chain. The nascent polypeptides leave the ribosome through a tunnel in the LSU and interact with protein factors that function in enzymatic processing, targeting, and the membrane insertion of nascent chains at the exit of the ribosomal tunnel. This Schizosaccharomyces pombe (strain 972 / ATCC 24843) (Fission yeast) protein is Large ribosomal subunit protein eL27A (rpl2701).